The primary structure comprises 1503 residues: Lysophospholipase NTE1 (1503 aa).

Residues 1–25 (MDSSTAALATASAKLDAVAQQGSSS) are Cytoplasmic-facing. A helical membrane pass occupies residues 26 to 46 (WIGFFANIILGIISLVYSILY). The Lumenal portion of the chain corresponds to 47–71 (SVLKLTTFSIPSLLYTLFSTSLTVT). A helical transmembrane segment spans residues 72 to 92 (MNATTLMLIIVLVFSLVSWFV). The Cytoplasmic portion of the chain corresponds to 93 to 1503 (RYRYLNMYSR…RTMAPRRASI (1411 aa)). Disordered regions lie at residues 252–348 (RHGG…TTSV), 454–561 (TKGI…SNPF), and 722–745 (KNES…RFMD). Composition is skewed to polar residues over residues 262 to 272 (TSATETYTSSR), 285 to 302 (STVS…SSHG), 487 to 496 (QRPSSVTASP), 506 to 542 (KHTS…STLL), 552 to 561 (PLSQRTSNPF), and 723 to 737 (NESS…QQGS). A nucleoside 3',5'-cyclic phosphate contacts are provided by residues 658–777 (GLPV…GYVG) and 821–941 (RLTN…IASR). The region spanning 1200 to 1364 (LVLGGGGARG…IDNLTVSHMK (165 aa)) is the PNPLA domain. The short motif at 1204–1209 (GGGARG) is the GXGXXG element. A GXSXG motif is present at residues 1231-1235 (GTSIG). Ser1233 (nucleophile) is an active-site residue. The active-site Proton acceptor is Asp1351. A DGA/G motif is present at residues 1351-1353 (DGG).

It belongs to the NTE family.

The protein localises to the endoplasmic reticulum membrane. It carries out the reaction a 1-acyl-sn-glycero-3-phosphocholine + H2O = sn-glycerol 3-phosphocholine + a fatty acid + H(+). With respect to regulation, inhibited by organophosphorus esters. Its function is as follows. Intracellular phospholipase B that catalyzes the double deacylation of phosphatidylcholine (PC) to glycerophosphocholine (GroPCho). Plays an important role in membrane lipid homeostasis. Responsible for the rapid PC turnover in response to inositol, elevated temperatures, or when choline is present in the growth medium. The polypeptide is Lysophospholipase NTE1 (NTE1) (Pyricularia oryzae (strain 70-15 / ATCC MYA-4617 / FGSC 8958) (Rice blast fungus)).